Here is a 361-residue protein sequence, read N- to C-terminus: Alanine racemase (361 aa).

The Proton acceptor; specific for D-alanine role is filled by K35. K35 is modified (N6-(pyridoxal phosphate)lysine). R132 lines the substrate pocket. Y257 acts as the Proton acceptor; specific for L-alanine in catalysis. Position 305 (M305) interacts with substrate.

This sequence belongs to the alanine racemase family. Pyridoxal 5'-phosphate is required as a cofactor.

The catalysed reaction is L-alanine = D-alanine. Its pathway is amino-acid biosynthesis; D-alanine biosynthesis; D-alanine from L-alanine: step 1/1. Functionally, catalyzes the interconversion of L-alanine and D-alanine. May also act on other amino acids. The protein is Alanine racemase (alr) of Thioalkalivibrio sulfidiphilus (strain HL-EbGR7).